The following is a 386-amino-acid chain: Succinate--CoA ligase [ADP-forming] subunit beta (386 aa).

Positions 9–244 (KEILRKYGVP…HDEEDPLETR (236 aa)) constitute an ATP-grasp domain. ATP is bound by residues Lys-46, 53-55 (GRG), Glu-99, Cys-102, and Glu-107. Positions 199 and 213 each coordinate Mg(2+). Residues Asn-264 and 321–323 (GIM) each bind substrate.

The protein belongs to the succinate/malate CoA ligase beta subunit family. Heterotetramer of two alpha and two beta subunits. It depends on Mg(2+) as a cofactor.

The enzyme catalyses succinate + ATP + CoA = succinyl-CoA + ADP + phosphate. The catalysed reaction is GTP + succinate + CoA = succinyl-CoA + GDP + phosphate. It participates in carbohydrate metabolism; tricarboxylic acid cycle; succinate from succinyl-CoA (ligase route): step 1/1. Functionally, succinyl-CoA synthetase functions in the citric acid cycle (TCA), coupling the hydrolysis of succinyl-CoA to the synthesis of either ATP or GTP and thus represents the only step of substrate-level phosphorylation in the TCA. The beta subunit provides nucleotide specificity of the enzyme and binds the substrate succinate, while the binding sites for coenzyme A and phosphate are found in the alpha subunit. The sequence is that of Succinate--CoA ligase [ADP-forming] subunit beta from Rickettsia conorii (strain ATCC VR-613 / Malish 7).